We begin with the raw amino-acid sequence, 115 residues long: Large ribosomal subunit protein bL20 (115 aa).

This sequence belongs to the bacterial ribosomal protein bL20 family.

Functionally, binds directly to 23S ribosomal RNA and is necessary for the in vitro assembly process of the 50S ribosomal subunit. It is not involved in the protein synthesizing functions of that subunit. The sequence is that of Large ribosomal subunit protein bL20 from Salinibacter ruber (strain DSM 13855 / M31).